A 39-amino-acid chain; its full sequence is Photosystem II reaction center protein Psb30 (39 aa).

A helical transmembrane segment spans residues 12–32 (IFQLTFVGLIVIAGPIVIAVL).

It belongs to the Psb30/Ycf12 family. In terms of assembly, PSII is composed of 1 copy each of membrane proteins PsbA, PsbB, PsbC, PsbD, PsbE, PsbF, PsbH, PsbI, PsbJ, PsbK, PsbL, PsbM, PsbT, PsbX, PsbY, PsbZ, Psb30/Ycf12, peripheral proteins PsbO, CyanoQ (PsbQ), PsbU, PsbV and a large number of cofactors. It forms dimeric complexes.

The protein localises to the cellular thylakoid membrane. A core subunit of photosystem II (PSII), probably helps stabilize the reaction center. This Crocosphaera subtropica (strain ATCC 51142 / BH68) (Cyanothece sp. (strain ATCC 51142)) protein is Photosystem II reaction center protein Psb30.